We begin with the raw amino-acid sequence, 342 residues long: Probable dual-specificity RNA methyltransferase RlmN (342 aa).

The active-site Proton acceptor is the glutamate 91. Positions tyrosine 97–aspartate 327 constitute a Radical SAM core domain. Cysteine 104 and cysteine 332 are oxidised to a cystine. Residues cysteine 111, cysteine 115, and cysteine 118 each coordinate [4Fe-4S] cluster. S-adenosyl-L-methionine-binding positions include glycine 158–glutamate 159, serine 190, serine 213–histidine 215, and asparagine 289. Catalysis depends on cysteine 332, which acts as the S-methylcysteine intermediate.

It belongs to the radical SAM superfamily. RlmN family. Requires [4Fe-4S] cluster as cofactor.

Its subcellular location is the cytoplasm. It carries out the reaction adenosine(2503) in 23S rRNA + 2 reduced [2Fe-2S]-[ferredoxin] + 2 S-adenosyl-L-methionine = 2-methyladenosine(2503) in 23S rRNA + 5'-deoxyadenosine + L-methionine + 2 oxidized [2Fe-2S]-[ferredoxin] + S-adenosyl-L-homocysteine. The catalysed reaction is adenosine(37) in tRNA + 2 reduced [2Fe-2S]-[ferredoxin] + 2 S-adenosyl-L-methionine = 2-methyladenosine(37) in tRNA + 5'-deoxyadenosine + L-methionine + 2 oxidized [2Fe-2S]-[ferredoxin] + S-adenosyl-L-homocysteine. Its function is as follows. Specifically methylates position 2 of adenine 2503 in 23S rRNA and position 2 of adenine 37 in tRNAs. This is Probable dual-specificity RNA methyltransferase RlmN from Clostridium botulinum (strain Langeland / NCTC 10281 / Type F).